The chain runs to 765 residues: Leucine-rich repeat and calponin homology domain-containing protein 2 (765 aa).

2 disordered regions span residues 1–39 and 55–76; these read MAAS…GGGG and LFGQ…PQHT. LRR repeat units lie at residues 89-110, 112-133, 135-156, 158-179, 180-201, 203-224, 226-248, 249-269, and 271-292; these read SSGI…GYDL, DTTQ…VWLF, PLET…IKNL, MLTY…LFDL, PLKV…IGKL, DLME…MGKL, SLRE…GDLP, LVKL…YRKL, and HLQV…ICLK. The disordered stretch occupies residues 316–401; sequence LDLPSLSKRM…GSKTDSQKDQ (86 aa). Residues 378–388 show a composition bias toward basic and acidic residues; that stretch reads SNREQTSRNDS. Residues 438–472 adopt a coiled-coil conformation; sequence SEKSRKNEELGDEKRLEKEQLLAEEEDDDLKEVTD. Disordered stretches follow at residues 498 to 552 and 565 to 628; these read RNKP…QSEE and KYKS…EYGA. Residues 503–512 are compositionally biased toward basic and acidic residues; it reads QTVECEKSVS. Polar residues-rich tracts occupy residues 518–529 and 584–595; these read SPLSPLTWQPLE and DNANMSTQSPVS. The Calponin-homology (CH) domain maps to 642 to 755; it reads LREEREQIRQ…VTVQALLELP (114 aa).

May play a role in the organization of the cytoskeleton. This Homo sapiens (Human) protein is Leucine-rich repeat and calponin homology domain-containing protein 2 (LRCH2).